An 854-amino-acid chain; its full sequence is MTASDIQPTEPHTPPTPHADTRLVDRTKLSKMYQHYVEVKDKYPHALLLYRVGDFFETFFQDAVTVARELELVLTSKHGGEVGRVAMTGVPHHAWERYTTQLVEKGYAVVICDQVEDASEAVGLVRREVTRILTPGTLLEEGMLKSSRNNYLAAVVITSNHWGLAYADISTGEFLTTQDSDLERLTQELMRLQPSEVLVPTNAPDLGTLLRPGETSPHLPECLPPSFCYSLRSQQPFSQAEARSTLLQRFKVRSLEGLGCDHLPLAVRAAGGLLEYVEDTQKAGQVSLQRLRTYTITDYLIVDNQTRRNLEITQTVRDGTFHGSLLWALDKTSTAMGSRALRRWLLQPLLDIKGISSRQDTIQELVTNTRLRQDLRHLLRQIYDLERLTGRASSGTANARDLVALADSLSRLPELANLVIDAHSPFLKALQKVPPILEELAQKIHAHLVESPPLHLKEGGLIRPGVNPLLDERKATVEADHQWIANLEVDERARTGIPLLKVGFNETFGYYISISRAKADQVPANYIRKQTLKNEERYITPELKEREARILTARDDLHKLEYEVFVTLREEVGEQAEAIRHLSRAVAAADVLCGLAELAVYQGYCRPEMVNGREIAIIDGRHPVVEQSLPAGFFVPNSTQLGSNEETHQLPDLIILTGPNASGKSCYLRQVGLIQLMAQIGSFVPAKSARLGICDRIFTRVGAVDDLATGQSTFMVEMNETANILNHATSRSLVLLDEIGRGTATFDGLSIAWAVAEYIATEIRSRTIFATHYHELNELAGMLPNVANYQVTVKELPDQIIFLHQVQPGGADKSYGIEAGRLAGLPTVVIQRAKQVMGQIEKHSKIAMGLQNLD.

Positions 1 to 21 are disordered; the sequence is MTASDIQPTEPHTPPTPHADT. 658–665 provides a ligand contact to ATP; the sequence is GPNASGKS.

It belongs to the DNA mismatch repair MutS family.

This protein is involved in the repair of mismatches in DNA. It is possible that it carries out the mismatch recognition step. This protein has a weak ATPase activity. This chain is DNA mismatch repair protein MutS, found in Trichormus variabilis (strain ATCC 29413 / PCC 7937) (Anabaena variabilis).